Here is a 215-residue protein sequence, read N- to C-terminus: Methylthioribulose-1-phosphate dehydratase (215 aa).

Positions 103 and 105 each coordinate Zn(2+).

It belongs to the aldolase class II family. MtnB subfamily. The cofactor is Zn(2+).

The enzyme catalyses 5-(methylsulfanyl)-D-ribulose 1-phosphate = 5-methylsulfanyl-2,3-dioxopentyl phosphate + H2O. It functions in the pathway amino-acid biosynthesis; L-methionine biosynthesis via salvage pathway; L-methionine from S-methyl-5-thio-alpha-D-ribose 1-phosphate: step 2/6. Its function is as follows. Catalyzes the dehydration of methylthioribulose-1-phosphate (MTRu-1-P) into 2,3-diketo-5-methylthiopentyl-1-phosphate (DK-MTP-1-P). This chain is Methylthioribulose-1-phosphate dehydratase, found in Sulfurihydrogenibium sp. (strain YO3AOP1).